The chain runs to 396 residues: Chorismate synthase (396 aa).

Positions 41 and 47 each coordinate NADP(+). Residues 130–132, Gly298, 313–317, and Arg339 each bind FMN; these read RAS and KPIPT.

Belongs to the chorismate synthase family. In terms of assembly, homotetramer. Requires FMNH2 as cofactor.

The enzyme catalyses 5-O-(1-carboxyvinyl)-3-phosphoshikimate = chorismate + phosphate. It functions in the pathway metabolic intermediate biosynthesis; chorismate biosynthesis; chorismate from D-erythrose 4-phosphate and phosphoenolpyruvate: step 7/7. Catalyzes the anti-1,4-elimination of the C-3 phosphate and the C-6 proR hydrogen from 5-enolpyruvylshikimate-3-phosphate (EPSP) to yield chorismate, which is the branch point compound that serves as the starting substrate for the three terminal pathways of aromatic amino acid biosynthesis. This reaction introduces a second double bond into the aromatic ring system. In Syntrophomonas wolfei subsp. wolfei (strain DSM 2245B / Goettingen), this protein is Chorismate synthase.